Consider the following 77-residue polypeptide: Sec-independent protein translocase protein TatA (77 aa).

Residues 3-23 (VFGIGLPELIVILVVALLIFG) traverse the membrane as a helical segment. Residues 56–77 (TAALEEEQQAKAEAESPREISP) form a disordered region. The span at 63-77 (QQAKAEAESPREISP) shows a compositional bias: basic and acidic residues.

It belongs to the TatA/E family. As to quaternary structure, forms a complex with TatC.

The protein localises to the cell inner membrane. Its function is as follows. Part of the twin-arginine translocation (Tat) system that transports large folded proteins containing a characteristic twin-arginine motif in their signal peptide across membranes. TatA could form the protein-conducting channel of the Tat system. This chain is Sec-independent protein translocase protein TatA, found in Thermosynechococcus vestitus (strain NIES-2133 / IAM M-273 / BP-1).